A 345-amino-acid polypeptide reads, in one-letter code: Phenylalanine--tRNA ligase alpha subunit (345 aa).

Residue Glu255 participates in Mg(2+) binding.

It belongs to the class-II aminoacyl-tRNA synthetase family. Phe-tRNA synthetase alpha subunit type 1 subfamily. In terms of assembly, tetramer of two alpha and two beta subunits. Requires Mg(2+) as cofactor.

It localises to the cytoplasm. It carries out the reaction tRNA(Phe) + L-phenylalanine + ATP = L-phenylalanyl-tRNA(Phe) + AMP + diphosphate + H(+). In Lysinibacillus sphaericus (strain C3-41), this protein is Phenylalanine--tRNA ligase alpha subunit.